The primary structure comprises 560 residues: IQ motif and ankyrin repeat domain-containing protein 1 (560 aa).

A disordered region spans residues 1–72 (MDSKKGRPKA…DRAARAIQGA (72 aa)). Positions 62–91 (EDRAARAIQGAFRQLRARRELARRREERRE) constitute an IQ domain. ANK repeat units follow at residues 191–223 (YGNTPLSEAAAGGQPLAIQLRAELGASPNSKGA) and 224–253 (FGPTPLYRAAFGGHLAAVEVLLKLGADPRV). Positions 281-398 (LTEAMLQNME…RLELREQTQE (118 aa)) form a coiled coil.

This Homo sapiens (Human) protein is IQ motif and ankyrin repeat domain-containing protein 1.